The following is a 78-amino-acid chain: Esculentin-2ISa (78 aa).

A signal peptide spans 1–22; it reads MFTLKKSLLLLFFLGTISLSVC. The propeptide at 23 to 39 is removed in mature form; that stretch reads KQERDADYEDKGEVEEV. Residues cysteine 72 and cysteine 78 are joined by a disulfide bond.

Expressed by the skin glands.

Its subcellular location is the secreted. Has antimicrobial activity against Gram-negative bacterium E.coli ATCC 8739 (MIC=12.5 ug), against Gram positive bacteria S.aureus ATCC 6538 (MIC=3.1 ug), methicillin-resistant S.aureus ATCC 43300 (MIC=25 ug), B.subtilis ATCC 6633 (MIC=6.3 ug) and against fungus C.albicans ATCC 90028 (MIC=100 ug). This is Esculentin-2ISa from Odorrana ishikawae (Ishikawa's frog).